A 435-amino-acid polypeptide reads, in one-letter code: Oocyte zinc finger protein XlCOF22 (435 aa).

The interval 71–92 (NANTSAHFSRNRDSDKHERTHT) is disordered. Over residues 80–91 (RNRDSDKHERTH) the composition is skewed to basic and acidic residues. C2H2-type zinc fingers lie at residues 97-120 (HSCSQCGKCFSSSSDLLAHRRQSH), 126-148 (FSCSECGKCFSFRSRLIDHQRTH), 154-176 (FCCFQCGKSFSVRSRFLDHRRTH), 182-204 (FSCLECGKCFLFRSRLLEHQRTH), 210-232 (FSCLKCGKCFSVRSRLKDHQRTH), 238-260 (FSCLECGKSFSFRPCLIDHQRTH), 266-288 (FSCFQCGKCFSFQSRLINHQRTH), 294-316 (FSCSECGKSFSNQSCLRVHQRTH), 322-345 (YSCSECGKSFVTSSQLAVHRRRTH), 351-373 (FSCSECGKCFSNQSCLRVHQRTH), 379-402 (FSCSECGKSFVTSSKLASHQRQTH), and 408-430 (VSCSECGKCFTRKRSLKVHFKIH).

This sequence belongs to the krueppel C2H2-type zinc-finger protein family.

The protein resides in the nucleus. Functionally, may be involved in transcriptional regulation. The chain is Oocyte zinc finger protein XlCOF22 from Xenopus laevis (African clawed frog).